We begin with the raw amino-acid sequence, 303 residues long: MRLSKAQYDEIALFISTLRPTRQCMKRLKERFPCQSQSTLLSIFSQEYQKMIKRTHAKHHTPEAVEMYYARYLNEVARDPKVPILLELANEVDFSPALMARTVLERFLQDHDGQPPTKPVLSSMLRDPSLIPDPVLANQVHLCIINDCFNGPLVDGIKHAIGHEHEVLLRQKLKEHNLAFLDEDQLRLKGYDKTPDVILEVPVAVDGHVIHWIESKASFGDEASHKTYLHDQFWSYWNRFGPGLVIYWYGFIEDLDCNRERGILLKDGFPETLVMLGSCMAQTDEHGQHTKNCLNETHQETES.

Its subcellular location is the nucleus. The protein localises to the cytoplasm. In terms of biological role, may play a role in erythroid cell differentiation. This is CDAN1-interacting nuclease 1 from Xenopus laevis (African clawed frog).